Reading from the N-terminus, the 438-residue chain is Probable glycine dehydrogenase (decarboxylating) subunit 1 (438 aa).

It belongs to the GcvP family. N-terminal subunit subfamily. As to quaternary structure, the glycine cleavage system is composed of four proteins: P, T, L and H. In this organism, the P 'protein' is a heterodimer of two subunits.

The catalysed reaction is N(6)-[(R)-lipoyl]-L-lysyl-[glycine-cleavage complex H protein] + glycine + H(+) = N(6)-[(R)-S(8)-aminomethyldihydrolipoyl]-L-lysyl-[glycine-cleavage complex H protein] + CO2. Functionally, the glycine cleavage system catalyzes the degradation of glycine. The P protein binds the alpha-amino group of glycine through its pyridoxal phosphate cofactor; CO(2) is released and the remaining methylamine moiety is then transferred to the lipoamide cofactor of the H protein. The chain is Probable glycine dehydrogenase (decarboxylating) subunit 1 from Syntrophomonas wolfei subsp. wolfei (strain DSM 2245B / Goettingen).